The sequence spans 324 residues: o-succinylbenzoate synthase (324 aa).

The Proton donor role is filled by lysine 135. 3 residues coordinate Mg(2+): aspartate 163, glutamate 192, and aspartate 215. Lysine 237 functions as the Proton acceptor in the catalytic mechanism.

This sequence belongs to the mandelate racemase/muconate lactonizing enzyme family. MenC type 1 subfamily. The cofactor is a divalent metal cation.

The catalysed reaction is (1R,6R)-6-hydroxy-2-succinyl-cyclohexa-2,4-diene-1-carboxylate = 2-succinylbenzoate + H2O. It functions in the pathway quinol/quinone metabolism; 1,4-dihydroxy-2-naphthoate biosynthesis; 1,4-dihydroxy-2-naphthoate from chorismate: step 4/7. Its pathway is quinol/quinone metabolism; menaquinone biosynthesis. Functionally, converts 2-succinyl-6-hydroxy-2,4-cyclohexadiene-1-carboxylate (SHCHC) to 2-succinylbenzoate (OSB). In Aliivibrio fischeri (strain ATCC 700601 / ES114) (Vibrio fischeri), this protein is o-succinylbenzoate synthase.